The following is a 380-amino-acid chain: 1-deoxy-D-xylulose 5-phosphate reductoisomerase (380 aa).

NADPH contacts are provided by Thr10, Gly11, Ser12, Ile13, Gly36, Arg37, Asn38, and Asn120. Residue Lys121 participates in 1-deoxy-D-xylulose 5-phosphate binding. Glu122 contacts NADPH. Position 146 (Asp146) interacts with Mn(2+). The 1-deoxy-D-xylulose 5-phosphate site is built by Ser147, Glu148, Ser172, and His195. Position 148 (Glu148) interacts with Mn(2+). NADPH is bound at residue Gly201. The 1-deoxy-D-xylulose 5-phosphate site is built by Ser208, Asn213, Lys214, and Glu217. Glu217 contacts Mn(2+).

It belongs to the DXR family. Requires Mg(2+) as cofactor. Mn(2+) serves as cofactor.

It carries out the reaction 2-C-methyl-D-erythritol 4-phosphate + NADP(+) = 1-deoxy-D-xylulose 5-phosphate + NADPH + H(+). It functions in the pathway isoprenoid biosynthesis; isopentenyl diphosphate biosynthesis via DXP pathway; isopentenyl diphosphate from 1-deoxy-D-xylulose 5-phosphate: step 1/6. In terms of biological role, catalyzes the NADPH-dependent rearrangement and reduction of 1-deoxy-D-xylulose-5-phosphate (DXP) to 2-C-methyl-D-erythritol 4-phosphate (MEP). In Listeria monocytogenes serotype 4a (strain HCC23), this protein is 1-deoxy-D-xylulose 5-phosphate reductoisomerase.